Here is a 132-residue protein sequence, read N- to C-terminus: Iron-sulfur cluster assembly 1 homolog, mitochondrial (132 aa).

The transit peptide at 1–15 directs the protein to the mitochondrion; that stretch reads MASSASSVVRATVRA. Fe cation-binding residues include Cys-60, Cys-124, and Cys-126.

The protein belongs to the HesB/IscA family. Homooligomer, forming a rod-shaped structure 24 nm in length that may arise through a double-helical assembly of subunits. Interacts with CRY4; CRY4 seems to be associated with the outside of the rod-shaped homooligomer. Does not interact with CRY1 or CRY2. Detected in retina, especially in the retinal ganglion layer, the inner nuclear layer and the outer nuclear layer. Detected in retina visual pigment cells (at protein level).

It is found in the mitochondrion. Its function is as follows. Involved in the maturation of mitochondrial 4Fe-4S proteins functioning late in the iron-sulfur cluster assembly pathway. Probably involved in the binding of an intermediate of Fe/S cluster assembly. Component of a putative magnetoreceptor complex formed by ISCA1 and CRY4, a member of the cryptochrome family that are known to be required for light-dependent magnetosensitivity in various orgnisms. The rod-like assembly may facilitate the perception of the Earth's weak magnetic field. Both ISCA1 and the complex with CRY4 have magnetic properties and are attracted to iron beads. When exposed to a magnetic field of 1 mT (superior to the natural magnetic field), over 50% of the rod-like complexes align more or less in parallel with the magnetic field at room temperature. In Columba livia (Rock dove), this protein is Iron-sulfur cluster assembly 1 homolog, mitochondrial (ISCA1).